The sequence spans 132 residues: uncharacterized protein (132 aa).

Positions 1–24 (MVTIGSSSLVLFLFFVVFVQITYT) are cleaved as a signal peptide. 2 consecutive transmembrane segments (helical) span residues 75-95 (YVNVEIIVGIPLLIKAIILGI) and 112-132 (ESAILHNSINIIIIILYVYIH).

Its subcellular location is the membrane. This is an uncharacterized protein from Saccharomyces cerevisiae (strain ATCC 204508 / S288c) (Baker's yeast).